The following is a 217-amino-acid chain: tRNA (guanine-N(7)-)-methyltransferase (217 aa).

The S-adenosyl-L-methionine site is built by Glu-46, Glu-71, Asp-98, and Asp-120. Asp-120 is a catalytic residue. Lys-124 serves as a coordination point for substrate. An interaction with RNA region spans residues 126–131 (RHEKRR). Substrate contacts are provided by residues Asp-156 and 196-199 (TEYE).

This sequence belongs to the class I-like SAM-binding methyltransferase superfamily. TrmB family.

The catalysed reaction is guanosine(46) in tRNA + S-adenosyl-L-methionine = N(7)-methylguanosine(46) in tRNA + S-adenosyl-L-homocysteine. Its pathway is tRNA modification; N(7)-methylguanine-tRNA biosynthesis. Catalyzes the formation of N(7)-methylguanine at position 46 (m7G46) in tRNA. In Lactobacillus gasseri (strain ATCC 33323 / DSM 20243 / BCRC 14619 / CIP 102991 / JCM 1131 / KCTC 3163 / NCIMB 11718 / NCTC 13722 / AM63), this protein is tRNA (guanine-N(7)-)-methyltransferase.